Consider the following 320-residue polypeptide: Malate dehydrogenase (320 aa).

NAD(+) contacts are provided by residues 10–15 and aspartate 34; that span reads GAGQIG. Substrate contacts are provided by arginine 83 and arginine 89. NAD(+) contacts are provided by residues asparagine 96 and 119-121; that span reads ITN. Asparagine 121 and arginine 152 together coordinate substrate. The active-site Proton acceptor is histidine 176.

It belongs to the LDH/MDH superfamily. MDH type 3 family.

The enzyme catalyses (S)-malate + NAD(+) = oxaloacetate + NADH + H(+). Catalyzes the reversible oxidation of malate to oxaloacetate. This Cereibacter sphaeroides (strain ATCC 17025 / ATH 2.4.3) (Rhodobacter sphaeroides) protein is Malate dehydrogenase.